The following is a 211-amino-acid chain: Stromal cell-derived factor 2 (211 aa).

Positions 1–18 are cleaved as a signal peptide; sequence MAVLSLLLLGGLWSAVGA. MIR domains follow at residues 21–75, 83–138, and 139–193; these read MAVV…IRGK, GTPI…VLCN, and GPYW…AMEG.

Ubiquitously expressed with highest expression in liver and kidney.

It localises to the secreted. This chain is Stromal cell-derived factor 2 (Sdf2), found in Mus musculus (Mouse).